A 1059-amino-acid chain; its full sequence is Carbamoyl phosphate synthase large chain (1059 aa).

Residues 1–401 are carboxyphosphate synthetic domain; the sequence is MPKRKDIQKI…SLLKACRSLE (401 aa). The ATP site is built by arginine 129, arginine 169, glycine 175, glycine 176, arginine 208, isoleucine 210, glutamate 215, glycine 241, isoleucine 242, histidine 243, glutamine 284, and glutamate 298. The region spanning 133 to 327 is the ATP-grasp 1 domain; the sequence is KQLMEELGQP…IAKLAAKIAV (195 aa). Positions 284, 298, and 300 each coordinate Mg(2+). Residues glutamine 284, glutamate 298, and asparagine 300 each coordinate Mn(2+). The interval 402–546 is oligomerization domain; the sequence is VGVDHNELPA…YSTYGFENES (145 aa). The carbamoyl phosphate synthetic domain stretch occupies residues 547–929; it reads VKSSKESVLV…ALYKAFEASY (383 aa). Residues 671–861 form the ATP-grasp 2 domain; it reads EQALKELDIP…MAQVATRLIL (191 aa). Arginine 707, serine 746, isoleucine 748, glutamate 752, glycine 777, valine 778, histidine 779, serine 780, glutamine 820, and glutamate 832 together coordinate ATP. The Mg(2+) site is built by glutamine 820, glutamate 832, and asparagine 834. The Mn(2+) site is built by glutamine 820, glutamate 832, and asparagine 834. In terms of domain architecture, MGS-like spans 930–1059; it reads LHLPNFGNVV…ESRSFTTEAI (130 aa). Positions 930–1059 are allosteric domain; it reads LHLPNFGNVV…ESRSFTTEAI (130 aa).

It belongs to the CarB family. Composed of two chains; the small (or glutamine) chain promotes the hydrolysis of glutamine to ammonia, which is used by the large (or ammonia) chain to synthesize carbamoyl phosphate. Tetramer of heterodimers (alpha,beta)4. It depends on Mg(2+) as a cofactor. Mn(2+) serves as cofactor.

The catalysed reaction is hydrogencarbonate + L-glutamine + 2 ATP + H2O = carbamoyl phosphate + L-glutamate + 2 ADP + phosphate + 2 H(+). It carries out the reaction hydrogencarbonate + NH4(+) + 2 ATP = carbamoyl phosphate + 2 ADP + phosphate + 2 H(+). Its pathway is amino-acid biosynthesis; L-arginine biosynthesis; carbamoyl phosphate from bicarbonate: step 1/1. It participates in pyrimidine metabolism; UMP biosynthesis via de novo pathway; (S)-dihydroorotate from bicarbonate: step 1/3. Functionally, large subunit of the glutamine-dependent carbamoyl phosphate synthetase (CPSase). CPSase catalyzes the formation of carbamoyl phosphate from the ammonia moiety of glutamine, carbonate, and phosphate donated by ATP, constituting the first step of 2 biosynthetic pathways, one leading to arginine and/or urea and the other to pyrimidine nucleotides. The large subunit (synthetase) binds the substrates ammonia (free or transferred from glutamine from the small subunit), hydrogencarbonate and ATP and carries out an ATP-coupled ligase reaction, activating hydrogencarbonate by forming carboxy phosphate which reacts with ammonia to form carbamoyl phosphate. This Streptococcus gordonii (strain Challis / ATCC 35105 / BCRC 15272 / CH1 / DL1 / V288) protein is Carbamoyl phosphate synthase large chain.